Consider the following 317-residue polypeptide: MERERLIDIVARILRRSGLKVARVELRGGCFDLVASGLFTLLFIKVVTNIDTVTPEQAEDLKRLAKLFKATPMIVGVRTKNSEIEEGVIYERFGIYALNPATLYRVLIEGELPAIFAERGGLYVRINGELLKKLREKHGYSVGELASLLGVSRKSLLNYERNEQAVSLEVALRMEELFDEPIAEPIDVLRAKVDVELKPAEPETPLEQEVFEKLKELGMGVVKVKRAPFNALSREDEVTILTGIDEKKTRSTVRRAEMVAEVGRIINTGGLFVLEKSKMEVVSEVPLIPKESLKEIKDVDELIELIEGLKREIRKSI.

In terms of domain architecture, HTH cro/C1-type spans 131-189; that stretch reads LKKLREKHGYSVGELASLLGVSRKSLLNYERNEQAVSLEVALRMEELFDEPIAEPIDVL. The H-T-H motif DNA-binding region spans 142–161; sequence VGELASLLGVSRKSLLNYER.

This chain is Putative HTH-type transcriptional regulatory protein TGAM_1316, found in Thermococcus gammatolerans (strain DSM 15229 / JCM 11827 / EJ3).